We begin with the raw amino-acid sequence, 138 residues long: Basic phospholipase A2 myotoxin I (138 aa).

Residues 1–16 (MRTLWIMAVLLVGVEG) form the signal peptide. 7 cysteine pairs are disulfide-bonded: Cys42–Cys131, Cys44–Cys60, Cys59–Cys111, Cys65–Cys138, Cys66–Cys104, Cys73–Cys97, and Cys91–Cys102. Ca(2+) contacts are provided by Tyr43, Gly45, and Gly47. The active site involves His63. Residue Asp64 coordinates Ca(2+). Asp105 is an active-site residue.

The protein belongs to the phospholipase A2 family. Group II subfamily. D49 sub-subfamily. Monomer. Homodimer; non-covalently linked (alternative/compact dimer conformation). Requires Ca(2+) as cofactor. In terms of tissue distribution, expressed by the venom gland.

It localises to the secreted. It carries out the reaction a 1,2-diacyl-sn-glycero-3-phosphocholine + H2O = a 1-acyl-sn-glycero-3-phosphocholine + a fatty acid + H(+). With respect to regulation, high level of membrane cholesterol content reduces cytolytic activity, whereas low level of membrane cholesterol content increases cytolytic activity. In terms of biological role, snake venom phospholipase A2 (PLA2) that displays local myotoxic activity. It also displays anticoagulant action in plasma and edema-inducing activities. In addition, it shows cytotoxic activity to a variety of cell types and bactericidal activity to a variety of Gram-negative and Gram-positive bacteria. PLA2 catalyzes the calcium-dependent hydrolysis of the 2-acyl groups in 3-sn-phosphoglycerides. The polypeptide is Basic phospholipase A2 myotoxin I (Bothrops asper (Terciopelo)).